The following is a 299-amino-acid chain: MDPEGLALLLPPATLATLADSWLREDCPGLNPVALVTGAAPSQAVLWAKSPGVLAGRPFFDAIFAQVNCQVSWFLPEGSKLVPVAKVAEVQGPAHCLLLGERVALNMLARCSGVASAAATAVETARGTGWAGHVAGTRKTTPGFRLVEKYGLLVGGATSHRYDLGGLVMVKDNHVVAAGGVEQAVQGARRAANFALKVEVECSSLQEALEAAEAGADLVLLDNFRPEELHPTAAALKAQFPTVGVEASGGVTLDNLPQFCGPHIDVISLGMLTQAAPALDFSLKLFAEGTTPVPYARKS.

The important for hexamer formation stretch occupies residues 8 to 12 (LLLPP). Quinolinate contacts are provided by residues Arg-102, 138–139 (RK), 160–161 (HR), Lys-171, Glu-201, Asp-222, 248–250 (SGG), and Gly-270.

The protein belongs to the NadC/ModD family. Hexamer formed by 3 homodimers.

The catalysed reaction is nicotinate beta-D-ribonucleotide + CO2 + diphosphate = quinolinate + 5-phospho-alpha-D-ribose 1-diphosphate + 2 H(+). Its pathway is cofactor biosynthesis; NAD(+) biosynthesis; nicotinate D-ribonucleotide from quinolinate: step 1/1. Its function is as follows. Involved in the catabolism of quinolinic acid (QA). This is Nicotinate-nucleotide pyrophosphorylase [carboxylating] from Sus scrofa (Pig).